A 304-amino-acid chain; its full sequence is MVKVEKFIPNAIDRIKEQAKGKTIIALSGGVDSSVCAVLAYQAIKDDLIPIYIDTGLMRKGETERIKEIFADMNLQTIDAKDRFLDALVGIKDPEEKRKVVGETFIRVFEEEAREINAQYLIQGTIYPDRIESDGGIKSHHNVGGLPEHIDFKGIIEPIDDLYKDEVREVAWALDLPEEICERMPFPGPGLSVRIIGEVTEEKVDVVREANAIVEEELLEQFKPWQTFAAVIGKGTGVKGDVRVHGWIIAVRAVGSRDGMTAEALELPWETLMKIESRISGEIASVARVLYDLSPKPPATIEFE.

Residues 2–183 (VKVEKFIPNA…LDLPEEICER (182 aa)) enclose the GMPS ATP-PPase domain. 28–34 (SGGVDSS) provides a ligand contact to ATP.

As to quaternary structure, heterodimer composed of a glutamine amidotransferase subunit (A) and a GMP-binding subunit (B).

The enzyme catalyses XMP + L-glutamine + ATP + H2O = GMP + L-glutamate + AMP + diphosphate + 2 H(+). The protein operates within purine metabolism; GMP biosynthesis; GMP from XMP (L-Gln route): step 1/1. In terms of biological role, catalyzes the synthesis of GMP from XMP. This chain is GMP synthase [glutamine-hydrolyzing] subunit B, found in Methanococcoides burtonii (strain DSM 6242 / NBRC 107633 / OCM 468 / ACE-M).